The sequence spans 675 residues: Protein PALS1 (675 aa).

Positions 1–345 (MTTSYMNGHV…QQIKPPPAKE (345 aa)) are required for the correct localization of PALS1 and PATJ at cell-cell contacts and the normal formation of tight junctions and adherens junctions. Serine 14 and serine 25 each carry phosphoserine. The interaction with PARD6B stretch occupies residues 21–140 (LDLASPEEYP…LKHIQHTLVD (120 aa)). Residues 51–79 (RRSAQLERIRQQQEDMRRRREEEGKKQEL) form a disordered region. Residues 54–79 (AQLERIRQQQEDMRRRREEEGKKQEL) show a composition bias toward basic and acidic residues. 2 positions are modified to phosphoserine: serine 83 and serine 84. L27 domains lie at 120 to 177 (NILD…SKAS) and 179 to 235 (PFPL…MQLE). Positions 181–243 (PLIANVQDLV…LEPITDERVY (63 aa)) are interaction with LIN7C. The region spanning 256–336 (IVRIEKARDI…TLTFVLIPSQ (81 aa)) is the PDZ domain. Positions 345–417 (ETVIHVKAHF…PGKSFQQQRE (73 aa)) constitute an SH3 domain. In terms of domain architecture, Guanylate kinase-like spans 479–660 (KRPIILIGPQ…AYQELLRLIN (182 aa)). 486–493 (GPQNCGQN) contributes to the ATP binding site.

The protein belongs to the MAGUK family. As to quaternary structure, heterodimer with MPP1. Forms a heterotrimeric complex composed of PALS1, LIN7B and PATJ; the N-terminal L27 domain of PALS1 interacts with the L27 domain of PATJ and the C-terminal L27 domain of PALS1 interacts with the L27 domain of LIN7B. Component of a complex composed of PALS1, CRB1 and MPP4. Component of a complex whose core is composed of ARHGAP17, AMOT, PALS1, PATJ and PARD3/PAR3. Component of a complex composed of PALS1, CRB1 and EPB41L5. Within the complex, interacts (via HOOK domain) with EPB41L5 (via FERM domain), and interacts with CRB1 (via intracellular domain). Component of a complex composed of PALS1, MPP3 and CRB1; PALS1 acts as a bridging protein between MPP3 (via guanylate kinase-like domain) and CRB1. Component of a complex composed of CRB3, PALS1 and PATJ. As part of the Crumbs complex; interacts with WWP1, the interaction is enhanced by AMOTL2 and facilitates WWP1 localization to the plasma membrane. The Crumbs complex promotes monoubiquitination of AMOTL2 by WWP1, which activates the Hippo signaling pathway. Interacts (via PDZ domain) with PATJ (via N-terminus). Interacts with EZR. Interacts (via PDZ domain) with CRB1 (via C-terminal ERLI motif). While the PDZ domain is sufficient for interaction with CRB1, the adjacent SH3 and guanylate kinase-like domains are likely to contribute to a high affinity interaction. Interacts with WWTR1/TAZ (via WW domain). Interacts with MPP7. Interacts (via PDZ domain) with CRB3 (via C-terminus). Interacts with LIN7C. Interacts with MPDZ. Interacts with PARD6B. Interacts with SC6A1. Interacts with CDH5; the interaction promotes PALS1 localization to cell junctions and is required for CDH5-mediated vascular lumen formation and endothelial cell. Interacts with NPHP1 (via coiled coil and SH3 domains). Interacts with NPHP4. Interacts with CRB2. In terms of tissue distribution, expressed in the retinal pigment epithelium (at protein level). Expressed in the vascular plexus of the retina (at protein level). In the brain, expressed in the dentate gyrus of hippocampus, striatum and cerebellum (at protein level). Expressed in the sciatic nerve (at protein level). Expressed in the kidney nephron (at protein level). Expressed in the lung, and heart. Expressed in placenta, brain, skeletal muscles, pancreas and liver.

It localises to the golgi apparatus. Its subcellular location is the cell membrane. It is found in the endomembrane system. The protein resides in the cell junction. The protein localises to the tight junction. It localises to the adherens junction. Its subcellular location is the cell projection. It is found in the axon. The protein resides in the perikaryon. The protein localises to the apical cell membrane. Plays a role in tight junction biogenesis and in the establishment of cell polarity in epithelial cells. Also involved in adherens junction biogenesis by ensuring correct localization of the exocyst complex protein EXOC4/SEC8 which allows trafficking of adherens junction structural component CDH1 to the cell surface. Plays a role through its interaction with CDH5 in vascular lumen formation and endothelial membrane polarity. Required during embryonic and postnatal retinal development. Required for the maintenance of cerebellar progenitor cells in an undifferentiated proliferative state, preventing premature differentiation, and is required for cerebellar histogenesis, fissure formation, cerebellar layer organization and cortical development. Plays a role in neuronal progenitor cell survival, potentially via promotion of mTOR signaling. Plays a role in the radial and longitudinal extension of the myelin sheath in Schwann cells. May modulate SC6A1/GAT1-mediated GABA uptake by stabilizing the transporter. May play a role in the T-cell receptor-mediated activation of NF-kappa-B. Required for localization of EZR to the apical membrane of parietal cells and may play a role in the dynamic remodeling of the apical cytoskeleton. Required for the normal polarized localization of the vesicular marker STX4. Required for the correct trafficking of the myelin proteins PMP22 and MAG. Involved in promoting phosphorylation and cytoplasmic retention of transcriptional coactivators YAP1 and WWTR1/TAZ which leads to suppression of TGFB1-dependent transcription of target genes such as CCN2/CTGF, SERPINE1/PAI1, SNAI1/SNAIL1 and SMAD7. The polypeptide is Protein PALS1 (Mus musculus (Mouse)).